We begin with the raw amino-acid sequence, 161 residues long: Nucleotide-binding protein Bcep1808_2648 (161 aa).

The protein belongs to the YajQ family.

In terms of biological role, nucleotide-binding protein. The protein is Nucleotide-binding protein Bcep1808_2648 of Burkholderia vietnamiensis (strain G4 / LMG 22486) (Burkholderia cepacia (strain R1808)).